A 331-amino-acid polypeptide reads, in one-letter code: Laforin (331 aa).

Residues 1–124 (MLFRFGVVVP…NNLVDGVYCL (124 aa)) enclose the CBM20 domain. Serine 25 bears the Phosphoserine; by AMPK mark. Residues tryptophan 32, lysine 87, 103–107 (GPHHD), aspartate 197, aspartate 235, and arginine 241 contribute to the substrate site. A Tyrosine-protein phosphatase domain is found at 156-323 (HYSRILPNIW…QQDFFQKFGK (168 aa)). Cysteine 266 acts as the Phosphocysteine intermediate in catalysis. Residues 266–272 (CNAGVGR) carry the Glucan phosphatase signature motif CXAGXGR motif. Residues 267–272 (NAGVGR) and tyrosine 304 each bind substrate.

This sequence belongs to the protein-tyrosine phosphatase family. Homodimer. Interacts with itself. Interacts with PPP1R3B, PPP1R3C, PPP1R3D, HIRIP5, and EPM2AIP1. Binds glycogen and Lafora bodies. Interacts with NHLRC1/malin (via the NHL repeats). Forms a complex with NHLRC1/malin and HSP70. Interacts with PPP1R3D; in the presence of NHLC1/malin the interaction leads to ubiquitination and autophagic degradation of PPP1R3D. Interacts (via the phosphatase domain) with MAPT/Tau; the interaction dephosphorylates MAPT. Interacts with PRDM8. In terms of processing, polyubiquitinated by NHLRC1/malin. Post-translationally, phosphorylation on Ser-25 by AMPK affects the phosphatase activity of the enzyme and its ability to homodimerize and interact with NHLRC1, PPP1R3C or PRKAA2. Widely expressed.

It localises to the cytoplasm. The protein localises to the endoplasmic reticulum membrane. Its subcellular location is the cell membrane. The catalysed reaction is O-phospho-L-tyrosyl-[protein] + H2O = L-tyrosyl-[protein] + phosphate. It carries out the reaction O-phospho-L-seryl-[protein] + H2O = L-seryl-[protein] + phosphate. The enzyme catalyses O-phospho-L-threonyl-[protein] + H2O = L-threonyl-[protein] + phosphate. Functionally, plays an important role in preventing glycogen hyperphosphorylation and the formation of insoluble aggregates, via its activity as glycogen phosphatase, and by promoting the ubiquitination of proteins involved in glycogen metabolism via its interaction with the E3 ubiquitin ligase NHLRC1/malin. Dephosphorylates phosphotyrosine and synthetic substrates, such as para-nitrophenylphosphate (pNPP), and has low activity with phosphoserine and phosphothreonine substrates (in vitro). Has also been shown to dephosphorylate MAPT. Shows strong phosphatase activity towards complex carbohydrates in vitro, avoiding glycogen hyperphosphorylation which is associated with reduced branching and formation of insoluble aggregates. Forms a complex with NHLRC1/malin and HSP70, which suppresses the cellular toxicity of misfolded proteins by promoting their degradation through the ubiquitin-proteasome system (UPS). Acts as a scaffold protein to facilitate PPP1R3C/PTG ubiquitination by NHLRC1/malin. Also promotes proteasome-independent protein degradation through the macroautophagy pathway. The sequence is that of Laforin (Epm2a) from Rattus norvegicus (Rat).